Here is a 1448-residue protein sequence, read N- to C-terminus: DNA primase TraC (1448 aa).

Composition is skewed to basic and acidic residues over residues 844–856 (ARVQ…RDPN), 863–872 (SAAKEARKTA), and 882–898 (DAQR…RDRQ). Disordered regions lie at residues 844-915 (ARVQ…INVP) and 952-982 (QGAA…QQAQ). Residues 964–982 (AQPAPEAQGEAQKPAQQAQ) are compositionally biased toward low complexity. The 89-residue stretch at 1237-1325 (PALVISEGYA…GKAIFPIFAP (89 aa)) folds into the Toprim domain. Residues 1414–1448 (ISQVQRDEQQHQEQKHVEKKQQQIEQRPRRAARIG) are disordered. The segment covering 1418-1441 (QRDEQQHQEQKHVEKKQQQIEQRP) has biased composition (basic and acidic residues).

Required for autonomous replication in E.coli. Transferred into the recipient cell during bacterial conjugation. Catalyzes the synthesis of short oligoribonucleotide primers with CpA or pCpA at their 5'-termini on a single-stranded template DNA. The polypeptide is DNA primase TraC (traC) (Escherichia coli).